We begin with the raw amino-acid sequence, 446 residues long: Na(+)-translocating NADH-quinone reductase subunit A (446 aa).

The protein belongs to the NqrA family. In terms of assembly, composed of six subunits; NqrA, NqrB, NqrC, NqrD, NqrE and NqrF.

The enzyme catalyses a ubiquinone + n Na(+)(in) + NADH + H(+) = a ubiquinol + n Na(+)(out) + NAD(+). NQR complex catalyzes the reduction of ubiquinone-1 to ubiquinol by two successive reactions, coupled with the transport of Na(+) ions from the cytoplasm to the periplasm. NqrA to NqrE are probably involved in the second step, the conversion of ubisemiquinone to ubiquinol. This chain is Na(+)-translocating NADH-quinone reductase subunit A, found in Vibrio campbellii (strain ATCC BAA-1116).